The following is a 152-amino-acid chain: NADH-ubiquinone oxidoreductase chain 4 (152 aa).

Helical transmembrane passes span 2 to 22 (FSGA…YFCL), 43 to 63 (ILLP…LALP), 84 to 104 (ITIV…LHMF), and 128 to 148 (MLMF…NIIL).

This sequence belongs to the complex I subunit 4 family.

The protein resides in the mitochondrion membrane. The catalysed reaction is a ubiquinone + NADH + 5 H(+)(in) = a ubiquinol + NAD(+) + 4 H(+)(out). Core subunit of the mitochondrial membrane respiratory chain NADH dehydrogenase (Complex I) that is believed to belong to the minimal assembly required for catalysis. Complex I functions in the transfer of electrons from NADH to the respiratory chain. The immediate electron acceptor for the enzyme is believed to be ubiquinone. In Macaca fascicularis (Crab-eating macaque), this protein is NADH-ubiquinone oxidoreductase chain 4 (MT-ND4).